We begin with the raw amino-acid sequence, 156 residues long: Small ribosomal subunit protein uS7 (156 aa).

The protein belongs to the universal ribosomal protein uS7 family. Part of the 30S ribosomal subunit. Contacts proteins S9 and S11.

In terms of biological role, one of the primary rRNA binding proteins, it binds directly to 16S rRNA where it nucleates assembly of the head domain of the 30S subunit. Is located at the subunit interface close to the decoding center, probably blocks exit of the E-site tRNA. The protein is Small ribosomal subunit protein uS7 of Latilactobacillus sakei subsp. sakei (strain 23K) (Lactobacillus sakei subsp. sakei).